Here is a 376-residue protein sequence, read N- to C-terminus: 23S rRNA (uracil(747)-C(5))-methyltransferase RlmC (376 aa).

Residues C3, C11, C14, and C87 each coordinate [4Fe-4S] cluster. The S-adenosyl-L-methionine site is built by Q212, F241, E262, and N307. C334 functions as the Nucleophile in the catalytic mechanism.

The protein belongs to the class I-like SAM-binding methyltransferase superfamily. RNA M5U methyltransferase family. RlmC subfamily.

It carries out the reaction uridine(747) in 23S rRNA + S-adenosyl-L-methionine = 5-methyluridine(747) in 23S rRNA + S-adenosyl-L-homocysteine + H(+). Catalyzes the formation of 5-methyl-uridine at position 747 (m5U747) in 23S rRNA. The sequence is that of 23S rRNA (uracil(747)-C(5))-methyltransferase RlmC from Yersinia pestis bv. Antiqua (strain Antiqua).